The sequence spans 779 residues: MINGLIQPKGSVSKETNKNSIALSLGLKFSEVEYLSTEILIDTYIVVFDPISEMVFYVGNAKGNPQTWNLNSDGNLILTTDFSTYTLLKIGLSNPDTSLKIGYQRKKINDSLSSIESVAGYMNSNFVSIMEFQHLITSKPNLNDMETWDWSPALDAAISYVQSYIPQTAVNSQMYGVMPIVFPPGVFQYSTEMKFTKYLNSTGSLSTCYTLIGSGMTSTVLQPITQGQNAFTATQCKINLINIGFRSGASYQTGAVLGSSTAWLPVVHSNWRCVGFSGFARGVVANLLFDSTFEDIFIQNISNMQSTSDVSYGFTFEVYTGPANGGTTGDGSGDDSNQITFIRPTIETSNADNAILFNASSINSTYPHHAINVFGGHIETHNLKAKCYNLKNCFNVNFYGTIFSQNGSAVDTNYRLGYIEACYNINFKNCRQVTTNRLTAYSSTDVKSIKITGNSKNIIFDNNHFINPYYSLNTYNKGPSYNIDSDTATVLDDSYLVINCTFNTYTNRNITSKISISNKNICNKNHILTVNDNGELVVSYTTSTDYSVTPTDILSFTNTGQIKTNGSIQLGIYNGTAGSKSIDFYSNGDKTTSMARILVDSSGRLYIRSFNGSQEWVFGSNAITPTTTSVYSIGSPSLTVNNLYVQNPVTVVSDENYKSNIQKIPDELLDAWENVEFNMWKMKAAINVKGITDARWHVGYIAQKIKSVLENAGLNWQDYGLITYESWIESEETYDQNGNVLSPYKAEGEIYMLRMEECLAVEMAYQRRKLDRIEKQLQK.

Positions 653–779 constitute a Peptidase S74 domain; that stretch reads SDENYKSNIQ…LDRIEKQLQK (127 aa).

In terms of processing, proteolytic cleavage and release of the chaperone in the host cytosol stabilizes the folded protein. The cleavage gives rise to the mature tail spike protein but is not essential for catalytic activity.

The protein resides in the virion. Functionally, functions as a receptor binding protein (RBP) and probably mediates the attachment to the host capsular exopolysaccharides. Displays a depolymerase activity that specifically degrades the K35-type polysaccharides of Klebsiella pneumoniae capsule. The C-terminal chaperone protein mediates homotrimerization and proper folding of the catalytic trimer. This is Probable tail spike protein from Klebsiella phage K64-1 (Bacteriophage K64-1).